The primary structure comprises 459 residues: Endoglucanase CelA (459 aa).

The N-terminal stretch at 1–27 is a signal peptide; it reads MKRLLALLATGVSIVGLTALAGPPAQA. Positions 28 to 134 constitute a CBM2 domain; it reads ATGCKAEYTI…TLNGATCSGS (107 aa). Cysteine 31 and cysteine 131 are disulfide-bonded. Residues 129–151 are disordered; that stretch reads ATCSGSVTDPPTDPPTDPPATGT. The tract at residues 136 to 147 is linker ('hinge') (Pro-Thr box); that stretch reads TDPPTDPPTDPP. The interval 148–357 is catalytic; sequence ATGTPAAVNG…YAFHFYAASH (210 aa). The active-site Proton donor is the glutamate 286. Glutamate 378 functions as the Nucleophile in the catalytic mechanism.

It belongs to the glycosyl hydrolase 5 (cellulase A) family. The linker region (also termed 'hinge') may be a potential site for proteolysis.

It carries out the reaction Endohydrolysis of (1-&gt;4)-beta-D-glucosidic linkages in cellulose, lichenin and cereal beta-D-glucans.. The protein is Endoglucanase CelA (celA) of Streptomyces lividans.